The sequence spans 702 residues: BRCA1-associated RING domain protein 1 (702 aa).

The RING-type zinc-finger motif lies at 18 to 67 (CVKCKKPRGDLQYLGSSCKHAYCWECIATFQQKPSGKRSSVARHMCPSCA). 2 disordered regions span residues 153–205 (DENR…TSVK) and 281–346 (ASMS…YGTR). The segment covering 174 to 188 (ASPTRNSTKRPSTVS) has biased composition (polar residues). Basic and acidic residues predominate over residues 312-321 (IKSDKIERRS). 3 ANK repeats span residues 347–376 (RGEAVLVNSIRNNRIPQLRSAVEAGTCVNE), 379–408 (DGKTPLYVAVENSSLEAVKILVEAGAVINA), and 413–442 (TLETTLHEAVRRQNTQIVEYLLSKGASIKI). A BRCT domain is found at 601–702 (MQPKLFAGCK…LGCSITTPPH (102 aa)).

In terms of assembly, heterodimer (via RING-type zinc finger) with brc-1 to form the core CeBCD complex. Brc-1-brd-1 heterodimer-containing CeBCD complexes bound to chromatin are activated as an E3-ubiquitin ligase in response to DNA damage. The heterodimer interacts with the recombinase rad-51 following ionizing irradiation; the interaction is direct. The heterodimer interacts the E2-ubiquitin-conjugating enzyme let-70 following ionizing irradiation. The heterodimer interacts with the pro-crossover proteins msh-5 and syp-3. Interacts with smt-3, tac-1 and ubc-9. Post-translationally, autoubiquitinated. Phosphorylation of CeBCD complexes is required for E3 ubiquitin-protein ligase activity.

The protein localises to the cytoplasm. It is found in the nucleus. It localises to the chromosome. The enzyme catalyses S-ubiquitinyl-[E2 ubiquitin-conjugating enzyme]-L-cysteine + [acceptor protein]-L-lysine = [E2 ubiquitin-conjugating enzyme]-L-cysteine + N(6)-ubiquitinyl-[acceptor protein]-L-lysine.. Its pathway is protein modification; protein ubiquitination. With respect to regulation, E3 ubiquitin-protein ligase activity of CeBCD complexes occurs at DNA damage sites. Following DNA damage, E3 ubiquitin-protein ligase activity is reduced by caffeine treatment (inhibitor of ATM and ATK kinase activity). Constituent of the CeBCD complex that possesses E3 ubiquitin-protein ligase activity. When bound to chromatin, the brc-1-brd-1 heterodimer within the CeBCD complex is inactive during normal conditions, but in response to DNA damage, the brc-1-brd-1 heterodimer associates with other proteins such as the recombinase rad-51 or the E2-ubiquitin-conjugating enzyme let-70, which activate the CeBCD complex as an E3-ubiquitin ligase. Moreover, association between the brc-1-brd-1 heterodimer and rad-51 and let-70, probably requires DNA checkpoint proteins such as atl-1 and mre-11 in order to induce ubiquitination at DNA damage sites. To this end, the brc-1-brd-1 heterodimer coordinates a diverse range of cellular pathways such as DNA damage repair, ubiquitination and transcriptional regulation to maintain genomic stability. Plays a role in triggering cellular responses at damage sites in response to DNA damage that may be induced by ionizing radiation for example. In particular, protects against chromosome non-disjunction and nuclear fragmentation during meiotic double-strand break repair to ensure sister chromatid recombination and aid chromosome stability. This Caenorhabditis elegans protein is BRCA1-associated RING domain protein 1.